Consider the following 37-residue polypeptide: Large ribosomal subunit protein bL36A (37 aa).

It belongs to the bacterial ribosomal protein bL36 family.

The polypeptide is Large ribosomal subunit protein bL36A (Neisseria meningitidis serogroup C (strain 053442)).